Reading from the N-terminus, the 140-residue chain is Ribonuclease P protein component (140 aa).

Residues 33–54 are disordered; the sequence is RALKPSSAKKSSLDTAAKTQPA.

It belongs to the RnpA family. As to quaternary structure, consists of a catalytic RNA component (M1 or rnpB) and a protein subunit.

The enzyme catalyses Endonucleolytic cleavage of RNA, removing 5'-extranucleotides from tRNA precursor.. Functionally, RNaseP catalyzes the removal of the 5'-leader sequence from pre-tRNA to produce the mature 5'-terminus. It can also cleave other RNA substrates such as 4.5S RNA. The protein component plays an auxiliary but essential role in vivo by binding to the 5'-leader sequence and broadening the substrate specificity of the ribozyme. This Trichormus variabilis (strain ATCC 29413 / PCC 7937) (Anabaena variabilis) protein is Ribonuclease P protein component.